The chain runs to 96 residues: VICTACGQQVNQFQKDSIYRHPTLNVLICKRWCAEGGNLICCDSCHNAFCKKCIWRNLGRKEISKIMNEKNEWHCYICCPEPLLDLIAVCDSVLEN.

The segment at 1 to 12 (VICTACGQQVNQ) adopts a GATA-type; atypical zinc-finger fold. The 96-residue stretch at 1-96 (VICTACGQQV…IAVCDSVLEN (96 aa)) folds into the ADD domain. The PHD-type; atypical zinc-finger motif lies at 27–82 (LICKRWCAEGGNLICCDSCHNAFCKKCIWRNLGRKEISKIMNEKNEWHCYICCPEP).

Belongs to the SNF2/RAD54 helicase family. As to expression, expressed in developing and adult testis. Also weakly expressed in prostate and epididymis.

Its subcellular location is the nucleus. It catalyses the reaction ATP + H2O = ADP + phosphate + H(+). Could be a global transcriptional regulator. Modifies gene expression by affecting chromatin. The chain is Transcriptional regulator ATRY (ATRY) from Notamacropus eugenii (Tammar wallaby).